We begin with the raw amino-acid sequence, 593 residues long: DNA mismatch repair protein MutL (593 aa).

The protein belongs to the DNA mismatch repair MutL/HexB family.

Its function is as follows. This protein is involved in the repair of mismatches in DNA. It is required for dam-dependent methyl-directed DNA mismatch repair. May act as a 'molecular matchmaker', a protein that promotes the formation of a stable complex between two or more DNA-binding proteins in an ATP-dependent manner without itself being part of a final effector complex. This Leptospira interrogans serogroup Icterohaemorrhagiae serovar copenhageni (strain Fiocruz L1-130) protein is DNA mismatch repair protein MutL.